The sequence spans 1227 residues: DNA-directed RNA polymerase subunit beta (1227 aa).

The protein belongs to the RNA polymerase beta chain family. The RNAP catalytic core consists of 2 alpha, 1 beta, 1 beta' and 1 omega subunit. When a sigma factor is associated with the core the holoenzyme is formed, which can initiate transcription.

The enzyme catalyses RNA(n) + a ribonucleoside 5'-triphosphate = RNA(n+1) + diphosphate. Functionally, DNA-dependent RNA polymerase catalyzes the transcription of DNA into RNA using the four ribonucleoside triphosphates as substrates. The chain is DNA-directed RNA polymerase subunit beta from Chloroflexus aurantiacus (strain ATCC 29366 / DSM 635 / J-10-fl).